The sequence spans 323 residues: tRNA dimethylallyltransferase (323 aa).

Position 32–39 (32–39) interacts with ATP; the sequence is GPTASGKS. A substrate-binding site is contributed by 34–39; it reads TASGKS. The interval 57–60 is interaction with substrate tRNA; that stretch reads DSMQ.

Belongs to the IPP transferase family. In terms of assembly, monomer. Requires Mg(2+) as cofactor.

It carries out the reaction adenosine(37) in tRNA + dimethylallyl diphosphate = N(6)-dimethylallyladenosine(37) in tRNA + diphosphate. Its function is as follows. Catalyzes the transfer of a dimethylallyl group onto the adenine at position 37 in tRNAs that read codons beginning with uridine, leading to the formation of N6-(dimethylallyl)adenosine (i(6)A). The polypeptide is tRNA dimethylallyltransferase (Rhodopseudomonas palustris (strain BisB5)).